The chain runs to 21 residues: Venom nerve growth factor Bco12 (21 aa).

The protein belongs to the NGF-beta family. In terms of assembly, homodimer; non-covalently linked. In terms of processing, glycosylated. Expressed by the venom gland.

It localises to the secreted. Its function is as follows. Nerve growth factor is important for the development and maintenance of the sympathetic and sensory nervous systems. It stimulates division and differentiation of sympathetic and embryonic sensory neurons as well as basal forebrain cholinergic neurons in the brain. Its relevance in the snake venom is not clear. However, it has been shown to inhibit metalloproteinase-dependent proteolysis of platelet glycoprotein Ib alpha, suggesting a metalloproteinase inhibition to prevent metalloprotease autodigestion and/or protection against prey proteases. Binds a lipid between the two protein chains in the homodimer. The lipid-bound form promotes histamine relase from mouse mast cells, contrary to the lipid-free form. This Bothrops cotiara (Cotiara) protein is Venom nerve growth factor Bco12.